A 165-amino-acid polypeptide reads, in one-letter code: Small histone ubiquitination factor 1 (165 aa).

The segment covering 1 to 17 (MSSRRNDYHYDGNDHQY) has biased composition (basic and acidic residues). The tract at residues 1-86 (MSSRRNDYHY…STRASFGAAS (86 aa)) is disordered. Composition is skewed to low complexity over residues 29 to 38 (SFYESSYRSR) and 50 to 60 (SSYDSPSSSTN). Over residues 73-86 (PSNNSTRASFGAAS) the composition is skewed to polar residues.

In terms of assembly, component of the histone H2B ubiquitin ligase complex (HULC) composed of at least brl1, brl2, rhp6 and shf1.

The protein resides in the nucleus. Its subcellular location is the cytoplasm. It is found in the cytoskeleton. The protein localises to the microtubule organizing center. It localises to the spindle pole body. Its function is as follows. Component of the histone H2B ubiquitin ligase complex (HULC) which plays a role in transcription regulation by catalyzing the monoubiquitination of histone H2B to form H2BK123ub1. H2BK123ub1 gives a specific tag for epigenetic transcriptional activation and is also a prerequisite for H3K4me and H3K79me formation. The polypeptide is Small histone ubiquitination factor 1 (shf1) (Schizosaccharomyces pombe (strain 972 / ATCC 24843) (Fission yeast)).